The chain runs to 419 residues: Tryptophan synthase beta chain (419 aa).

Position 86 is an N6-(pyridoxal phosphate)lysine (lysine 86). Over residues 394–403 (VEQQKVEQQK) the composition is skewed to basic and acidic residues. The interval 394–419 (VEQQKVEQQKADNQNTEKNNQESGNE) is disordered. Over residues 404-419 (ADNQNTEKNNQESGNE) the composition is skewed to polar residues.

This sequence belongs to the TrpB family. As to quaternary structure, tetramer of two alpha and two beta chains. Pyridoxal 5'-phosphate serves as cofactor.

The catalysed reaction is (1S,2R)-1-C-(indol-3-yl)glycerol 3-phosphate + L-serine = D-glyceraldehyde 3-phosphate + L-tryptophan + H2O. It functions in the pathway amino-acid biosynthesis; L-tryptophan biosynthesis; L-tryptophan from chorismate: step 5/5. Its function is as follows. The beta subunit is responsible for the synthesis of L-tryptophan from indole and L-serine. This chain is Tryptophan synthase beta chain, found in Shewanella halifaxensis (strain HAW-EB4).